We begin with the raw amino-acid sequence, 441 residues long: G-protein coupled receptor family C group 5 member C (441 aa).

The signal sequence occupies residues 1 to 22 (MATHKTLLMCLGLPLFFPGALA). At 23 to 49 (QNHAPPGCSPDLDPLYYNLCDRSGAWG) the chain is on the extracellular side. Residues 50 to 70 (IVLEAVAGAGIITTFVLTIIL) traverse the membrane as a helical segment. Residues 71–84 (VASLPFVQDTKKRS) are Cytoplasmic-facing. The chain crosses the membrane as a helical span at residues 85–105 (LLGTQVFFLLGTLGLFCLVFA). The Extracellular portion of the chain corresponds to 106–119 (CVVKPDFSTCASRR). Residues 120 to 140 (FLFGVLFAICFSCLIAHTLSL) traverse the membrane as a helical segment. The Cytoplasmic portion of the chain corresponds to 141–154 (NFLARKNHGPRGWV). The helical transmembrane segment at 155-175 (IFTVALLLTLVEVIINTEWLI) threads the bilayer. The Extracellular portion of the chain corresponds to 176-207 (ITLVRGGGQVSTPGNGSADWTVTSPCAIANMD). N-linked (GlcNAc...) asparagine glycosylation is present at asparagine 190. A helical membrane pass occupies residues 208 to 228 (FVMALIYVMLLLLAAFLGAWP). Topologically, residues 229-240 (TLCGRFKRWRKH) are cytoplasmic. The helical transmembrane segment at 241–261 (GVFVLLTTATSIAIWVVWIVM) threads the bilayer. Residues 262–278 (YTYGNKQHHSPTWDDPT) lie on the Extracellular side of the membrane. A helical transmembrane segment spans residues 279–299 (LAIALAANAWTFVFFYVIPEV). Residues 300 to 441 (SQVTKPSPEQ…DQSPKNKTRW (142 aa)) are Cytoplasmic-facing. Phosphoserine is present on residues serine 343, serine 382, serine 402, and serine 405. Tyrosine 413 bears the Phosphotyrosine mark. The disordered stretch occupies residues 419 to 441 (QVATPTKDGKISQDQSPKNKTRW). Position 422 is a phosphothreonine (threonine 422). A compositionally biased stretch (polar residues) spans 430 to 441 (SQDQSPKNKTRW). Serine 434 bears the Phosphoserine mark.

It belongs to the G-protein coupled receptor 3 family.

Its subcellular location is the cell membrane. Its function is as follows. This retinoic acid-inducible G-protein coupled receptor provide evidence for a possible interaction between retinoid and G-protein signaling pathways. In Rattus norvegicus (Rat), this protein is G-protein coupled receptor family C group 5 member C (Gprc5c).